The sequence spans 921 residues: Probable TonB-dependent receptor NMB1497 (921 aa).

Residues Met-1–Ala-25 form the signal peptide. Positions Asp-53–Leu-174 constitute a TBDR plug domain. The TBDR beta-barrel domain maps to Thr-185–Phe-921. Positions Leu-904–Phe-921 match the TonB C-terminal box motif.

It belongs to the TonB-dependent receptor family.

It localises to the cell outer membrane. Functionally, probable receptor, TonB-dependent. This Neisseria meningitidis serogroup B (strain ATCC BAA-335 / MC58) protein is Probable TonB-dependent receptor NMB1497.